A 78-amino-acid polypeptide reads, in one-letter code: Bowman-Birk type proteinase inhibitors I-A, I-B, and I-A' (78 aa).

7 cysteine pairs are disulfide-bonded: cysteine 18/cysteine 72, cysteine 19/cysteine 34, cysteine 22/cysteine 68, cysteine 24/cysteine 32, cysteine 42/cysteine 49, cysteine 46/cysteine 61, and cysteine 51/cysteine 59.

Belongs to the Bowman-Birk serine protease inhibitor family.

Its function is as follows. These inhibitors strongly inhibit trypsin. The sequence is that of Bowman-Birk type proteinase inhibitors I-A, I-B, and I-A' from Phaseolus angularis (Azuki bean).